The chain runs to 353 residues: Protein RecA (353 aa).

Glycine 67 to threonine 74 provides a ligand contact to ATP. Positions serine 330–phenylalanine 353 are disordered. A compositionally biased stretch (acidic residues) spans serine 339–phenylalanine 353.

It belongs to the RecA family.

The protein localises to the cytoplasm. Functionally, can catalyze the hydrolysis of ATP in the presence of single-stranded DNA, the ATP-dependent uptake of single-stranded DNA by duplex DNA, and the ATP-dependent hybridization of homologous single-stranded DNAs. It interacts with LexA causing its activation and leading to its autocatalytic cleavage. This chain is Protein RecA, found in Escherichia coli O157:H7 (strain EC4115 / EHEC).